The following is a 590-amino-acid chain: TPR repeat-containing protein PA4667 (590 aa).

TPR repeat units lie at residues 235 to 268 (VAPL…HPDD), 269 to 302 (KRVR…FPDD), 370 to 403 (LPAQ…QPDY), 405 to 438 (IQLY…YPED), and 508 to 541 (PAIL…YPDH).

This is TPR repeat-containing protein PA4667 from Pseudomonas aeruginosa (strain ATCC 15692 / DSM 22644 / CIP 104116 / JCM 14847 / LMG 12228 / 1C / PRS 101 / PAO1).